Consider the following 262-residue polypeptide: Acyl-[acyl-carrier-protein]--UDP-N-acetylglucosamine O-acyltransferase (262 aa).

This sequence belongs to the transferase hexapeptide repeat family. LpxA subfamily. As to quaternary structure, homotrimer.

It localises to the cytoplasm. The catalysed reaction is a (3R)-hydroxyacyl-[ACP] + UDP-N-acetyl-alpha-D-glucosamine = a UDP-3-O-[(3R)-3-hydroxyacyl]-N-acetyl-alpha-D-glucosamine + holo-[ACP]. It participates in glycolipid biosynthesis; lipid IV(A) biosynthesis; lipid IV(A) from (3R)-3-hydroxytetradecanoyl-[acyl-carrier-protein] and UDP-N-acetyl-alpha-D-glucosamine: step 1/6. Its function is as follows. Involved in the biosynthesis of lipid A, a phosphorylated glycolipid that anchors the lipopolysaccharide to the outer membrane of the cell. The sequence is that of Acyl-[acyl-carrier-protein]--UDP-N-acetylglucosamine O-acyltransferase from Paraburkholderia phymatum (strain DSM 17167 / CIP 108236 / LMG 21445 / STM815) (Burkholderia phymatum).